The following is a 581-amino-acid chain: Ras-specific guanine nucleotide-releasing factor RalGPS1 (581 aa).

The tract at residues 1–31 (MYRRNGLPASVSITSRNTQDSSSSESLDGRS) is disordered. One can recognise a Ras-GEF domain in the interval 49–288 (TPEEFASQIT…YSLSLKIEPG (240 aa)). Positions 320–339 (PDTSVVAHLPTPPPARHRKS) are disordered. A PXXP motif is present at residues 329–332 (PTPP). Positions 455 to 567 (SITIEGPLRR…WHRHLAEACR (113 aa)) constitute a PH domain.

The protein resides in the cytoplasm. It localises to the cell membrane. Its function is as follows. Guanine nucleotide exchange factor. May be involved in cytoskeletal organization. The chain is Ras-specific guanine nucleotide-releasing factor RalGPS1 (ralgps1) from Danio rerio (Zebrafish).